We begin with the raw amino-acid sequence, 295 residues long: Bifunctional protein FolD (295 aa).

NADP(+)-binding positions include G166–S168, S191, and I232.

Belongs to the tetrahydrofolate dehydrogenase/cyclohydrolase family. Homodimer.

It catalyses the reaction (6R)-5,10-methylene-5,6,7,8-tetrahydrofolate + NADP(+) = (6R)-5,10-methenyltetrahydrofolate + NADPH. The enzyme catalyses (6R)-5,10-methenyltetrahydrofolate + H2O = (6R)-10-formyltetrahydrofolate + H(+). The protein operates within one-carbon metabolism; tetrahydrofolate interconversion. Catalyzes the oxidation of 5,10-methylenetetrahydrofolate to 5,10-methenyltetrahydrofolate and then the hydrolysis of 5,10-methenyltetrahydrofolate to 10-formyltetrahydrofolate. This chain is Bifunctional protein FolD, found in Rhodopseudomonas palustris (strain BisB18).